The sequence spans 79 residues: Quinohemoprotein amine dehydrogenase subunit gamma (79 aa).

Positions 7–16 form a cross-link, 4-cysteinyl-glutamic acid (Cys-Glu); that stretch reads CTATTDPGWE. Cross-links (3-cysteinyl-aspartic acid (Cys-Asp)) lie at residues 27–33 and 41–49; these read CQPMEAD and CWWPAQVPD. Asp-33 serves as the catalytic Proton acceptor. The segment at residues 37-43 is a cross-link (4'-cysteinyl-tryptophylquinone (Cys-Trp)); the sequence is CSDPCWW. The residue at position 43 (Trp-43) is a Tryptophylquinone.

Belongs to the quinohemoprotein amine dehydrogenase subunit gamma family. In terms of assembly, heterotrimer of an alpha, a beta and a gamma subunit. Requires cysteine tryptophylquinone residue as cofactor. The cysteine tryptophylquinone (CTQ) is generated by oxidation of the indole ring of a tryptophan residue to form tryptophylquinone, followed by covalent cross-linking with a cysteine residue.

The protein localises to the periplasm. It catalyses the reaction an aliphatic amine + A + H2O = an aldehyde + AH2 + NH4(+). Functionally, catalyzes the oxidative deamination of a wide range of aliphatic monoamines and diamines. The physiological electron acceptor is an azurin-like blue protein. The polypeptide is Quinohemoprotein amine dehydrogenase subunit gamma (qhnDH) (Pseudomonas putida (strain ATCC 47054 / DSM 6125 / CFBP 8728 / NCIMB 11950 / KT2440)).